The chain runs to 169 residues: Transmembrane protein B169L (169 aa).

2 helical membrane passes run Asn28–Cys48 and Thr60–Asn80. The N-linked (GlcNAc...) asparagine; by host glycan is linked to Asn88. The segment at Asp107–Asn169 is disordered. Low complexity predominate over residues Ser144–Pro154.

The protein belongs to the asfivirus B169L family.

It localises to the host membrane. Its subcellular location is the virion. In Ornithodoros (relapsing fever ticks), this protein is Transmembrane protein B169L.